Consider the following 1045-residue polypeptide: Suppression of tumorigenicity 18 protein (1045 aa).

3 disordered regions span residues 38 to 90 (KKRR…NDHA), 158 to 228 (KAES…YNRK), and 340 to 364 (PRVT…RREA). Residues 52–63 (NKRKSLLMKPRH) show a composition bias toward basic residues. Composition is skewed to basic and acidic residues over residues 69–90 (GCKE…NDHA) and 159–177 (AESD…NGRD). CCHHC-type zinc fingers lie at residues 357 to 400 (PRPE…PLEI), 401 to 444 (LAMH…KLAM), 713 to 756 (RDLK…LKSL), 757 to 800 (MAAN…GIKM), 805 to 848 (EEKE…QKEN), and 858 to 901 (KLNK…IKKV). Positions 366, 371, 384, 390, 410, 415, 428, 434, 722, 727, 740, 746, 766, 771, 784, 790, 814, 819, 832, 838, 867, 872, 885, and 891 each coordinate Zn(2+). Residues 918-987 (IDGDEEIRHL…KELAGLSQAL (70 aa)) adopt a coiled-coil conformation.

The protein belongs to the MYT1 family.

Its subcellular location is the nucleus. In terms of biological role, repressor that binds to DNA sequences containing a bipartite element consisting of a direct repeat of the sequence 5'-AAAGTTT-3' separated by 2-9 nucleotides. Represses basal transcription activity from target promoters. The polypeptide is Suppression of tumorigenicity 18 protein (St18) (Mus musculus (Mouse)).